A 195-amino-acid chain; its full sequence is uncharacterized protein (195 aa).

The region spanning 34–165 is the Nudix hydrolase domain; sequence SHHAAVLIPI…WLDIHRGGVN (132 aa). Residues 72-94 carry the Nudix box motif; the sequence is GKADPQDSSLIETALREAEEEVA. The Mg(2+) site is built by Glu88 and Glu92.

This sequence belongs to the Nudix hydrolase family. PCD1 subfamily. Requires Mn(2+) as cofactor. It depends on Mg(2+) as a cofactor.

Probably mediates the hydrolysis of some nucleoside diphosphate derivatives. This is an uncharacterized protein from Yersinia enterocolitica serotype O:8 / biotype 1B (strain NCTC 13174 / 8081).